Here is a 351-residue protein sequence, read N- to C-terminus: 3-hydroxy-4-methyl-anthranilyl-[aryl-carrier protein] 5-monooxygenase (351 aa).

The protein belongs to the aromatic-ring hydroxylase family. FAD is required as a cofactor.

The catalysed reaction is 3-hydroxy-4-methylanthranilyl-[aryl-carrier protein] + NADH + O2 + H(+) = 3,5-dihydroxy-4-methylanthranilyl-[aryl-carrier protein] + NAD(+) + H2O. The protein operates within antibiotic biosynthesis. Functionally, involved in the biosynthesis of the antitumor antibiotic sibiromycin. Hydroxylates the C5 position of the peptidyl carrier protein (PCP)-bound 4-methyl-3-hydroxyanthranilic acid (4-MHA or 3H4MAA), leading to the formation of the fully substituted anthranilate moiety found in sibiromycin. The chain is 3-hydroxy-4-methyl-anthranilyl-[aryl-carrier protein] 5-monooxygenase from Streptosporangium sibiricum.